Consider the following 867-residue polypeptide: FO synthase (867 aa).

The segment at 1–22 is disordered; that stretch reads MTTSATSGTGPADPAGPTENSM. 2 Radical SAM core domains span residues 75–325 and 534–769; these read ITYS…LQAP and VTYI…LLHP. Residues 76-407 are cofG-like; sequence TYSKSVFVPL…PRLRPHVAAL (332 aa). Positions 89, 93, 96, 548, 552, and 555 each coordinate [4Fe-4S] cluster. Residues 511-844 are cofH-like; it reads EGPALDALCG…KPRTTLYGPV (334 aa). Residues 835–867 are disordered; sequence KPRTTLYGPVPEERQRAARDSDGHLPELLPVLD. The segment covering 845–859 has biased composition (basic and acidic residues); it reads PEERQRAARDSDGHL.

It in the N-terminal section; belongs to the radical SAM superfamily. CofG family. This sequence in the C-terminal section; belongs to the radical SAM superfamily. CofH family. The cofactor is [4Fe-4S] cluster.

The enzyme catalyses 5-amino-6-(D-ribitylamino)uracil + L-tyrosine + S-adenosyl-L-methionine = 5-amino-5-(4-hydroxybenzyl)-6-(D-ribitylimino)-5,6-dihydrouracil + 2-iminoacetate + 5'-deoxyadenosine + L-methionine + H(+). It carries out the reaction 5-amino-5-(4-hydroxybenzyl)-6-(D-ribitylimino)-5,6-dihydrouracil + S-adenosyl-L-methionine = 7,8-didemethyl-8-hydroxy-5-deazariboflavin + 5'-deoxyadenosine + L-methionine + NH4(+) + H(+). It participates in cofactor biosynthesis; coenzyme F0 biosynthesis. In terms of biological role, catalyzes the radical-mediated synthesis of 7,8-didemethyl-8-hydroxy-5-deazariboflavin (FO) from 5-amino-6-(D-ribitylamino)uracil and L-tyrosine. The sequence is that of FO synthase (fbiC) from Streptomyces coelicolor (strain ATCC BAA-471 / A3(2) / M145).